Here is a 532-residue protein sequence, read N- to C-terminus: Glucose-6-phosphate isomerase (532 aa).

Residue glutamate 330 is the Proton donor of the active site. Active-site residues include histidine 359 and lysine 461.

The protein belongs to the GPI family.

Its subcellular location is the cytoplasm. It catalyses the reaction alpha-D-glucose 6-phosphate = beta-D-fructose 6-phosphate. It functions in the pathway carbohydrate biosynthesis; gluconeogenesis. It participates in carbohydrate degradation; glycolysis; D-glyceraldehyde 3-phosphate and glycerone phosphate from D-glucose: step 2/4. In terms of biological role, catalyzes the reversible isomerization of glucose-6-phosphate to fructose-6-phosphate. This is Glucose-6-phosphate isomerase from Synechococcus sp. (strain CC9902).